Here is a 206-residue protein sequence, read N- to C-terminus: uncharacterized protein (206 aa).

This is an uncharacterized protein from Citrus psorosis virus (isolate Spain/P-121) (CPsV).